Reading from the N-terminus, the 96-residue chain is Large ribosomal subunit protein bL28 (96 aa).

The tract at residues 1-23 is disordered; sequence MSRVCELSGKAPMTGNTVSHANN.

This sequence belongs to the bacterial ribosomal protein bL28 family.

This Cereibacter sphaeroides (strain ATCC 17025 / ATH 2.4.3) (Rhodobacter sphaeroides) protein is Large ribosomal subunit protein bL28.